The sequence spans 712 residues: MSQEKQVFSIDLAGRQLTVETGQLAKQANGAVLVRYGDTAVLSTATASKEAKNVDFFPLTVNYEERLYAVGKIPGGFIKREGRPSEKAILASRLIDRPIRPLFADGFRNEVQVVSIVMSVDQDCSSEMAAMLGSSLALSISDIPFEGPIAGATVGRINGEFVINPTVEQQEQSDIHLVVAGTKDAINMVEAGADQVPEETMLEAIMFGHDEIKRLIAFQEEIVQAVGKEKSEVKLYEVDADLNQAVREMAEEDMHSAIQVHEKHAREDAINEVKKRVIEHYEAQEADADTLGQVNEILYKIVKEEVRRLITVEKIRPDGRKGDEIRPLASEVGILSRTHGSGLFTRGQTQALSICTLGALGDVQILDGLGVEESKRFMHHYNFPSFSVGETRPMRGPGRREIGHGAIGERALEPVIPSEKDFPYTVRLVSEVLESNGSTSQASICGSTLAMMDAGVPLKAPVAGIAMGLVKTGEHYTILSDIQGMEDHLGDMDFKVAGTAQGVTALQMDIKIDGLSREILEEALQQAKVGRVHILNHMLSVIPEPRTELSAYAPKIITMTINPDKIRDVIGPSGKQINKIIEETGVKIDIEQDGTVFISSINQEMNDKAKKIIEDIVREVQVGEIYEAKVKRVEKFGAFVELFSGKDGLVHISELALERVGKVEDVVKIGDVITVKVIEIDKQGRVNLSRKVLLKEEQEKEAVKEENKQEQQ.

Mg(2+) is bound by residues Asp-487 and Asp-493. The region spanning 554–613 (PKIITMTINPDKIRDVIGPSGKQINKIIEETGVKIDIEQDGTVFISSINQEMNDKAKKII) is the KH domain. Residues 623–691 (GEIYEAKVKR…KQGRVNLSRK (69 aa)) form the S1 motif domain.

Belongs to the polyribonucleotide nucleotidyltransferase family. Mg(2+) is required as a cofactor.

Its subcellular location is the cytoplasm. The catalysed reaction is RNA(n+1) + phosphate = RNA(n) + a ribonucleoside 5'-diphosphate. Functionally, involved in mRNA degradation. Catalyzes the phosphorolysis of single-stranded polyribonucleotides processively in the 3'- to 5'-direction. This chain is Polyribonucleotide nucleotidyltransferase, found in Bacillus cereus (strain ATCC 14579 / DSM 31 / CCUG 7414 / JCM 2152 / NBRC 15305 / NCIMB 9373 / NCTC 2599 / NRRL B-3711).